We begin with the raw amino-acid sequence, 126 residues long: Alpha-1-purothionin (126 aa).

The signal sequence occupies residues 1 to 16 (CLLILGLVLEQLQVEG). Intrachain disulfides connect Cys-19–Cys-55, Cys-20–Cys-47, Cys-28–Cys-45, and Cys-32–Cys-41. Positions 62-126 (LALESNSDEP…DAGLPSLDAY (65 aa)) are cleaved as a propeptide — acidic domain.

It belongs to the plant thionin (TC 1.C.44) family. 4 C-C subfamily.

The protein resides in the secreted. Thionins are small plant proteins which are toxic to animal cells. They seem to exert their toxic effect at the level of the cell membrane. Their precise function is not known. The polypeptide is Alpha-1-purothionin (THI1.1) (Triticum aestivum (Wheat)).